The chain runs to 212 residues: Uracil phosphoribosyltransferase (212 aa).

Residues Arg-78, Arg-103, and 130 to 138 (DPMLATGGS) each bind 5-phospho-alpha-D-ribose 1-diphosphate. Residues Ile-193 and 198 to 200 (GDA) contribute to the uracil site. Asp-199 serves as a coordination point for 5-phospho-alpha-D-ribose 1-diphosphate.

Belongs to the UPRTase family. Mg(2+) serves as cofactor.

It catalyses the reaction UMP + diphosphate = 5-phospho-alpha-D-ribose 1-diphosphate + uracil. The protein operates within pyrimidine metabolism; UMP biosynthesis via salvage pathway; UMP from uracil: step 1/1. Its activity is regulated as follows. Allosterically activated by GTP. In terms of biological role, catalyzes the conversion of uracil and 5-phospho-alpha-D-ribose 1-diphosphate (PRPP) to UMP and diphosphate. This Pseudomonas putida (strain ATCC 700007 / DSM 6899 / JCM 31910 / BCRC 17059 / LMG 24140 / F1) protein is Uracil phosphoribosyltransferase.